The primary structure comprises 475 residues: Ankyrin repeat, SAM and basic leucine zipper domain-containing protein 1 (475 aa).

Residues 1–24 (MAGSLGNLVVAGGGESSDSEEDYW) form a disordered region. Phosphoserine occurs at positions 16, 17, and 19. 6 ANK repeats span residues 44-73 (ERDE…SVES), 77-106 (FGWT…NASF), 109-146 (DQYT…VACR), 147-176 (KCMT…EINA), 180-209 (NGYT…NKTI), and 213-242 (DGKT…PLQG). The region spanning 273-336 (TAFGDLEVFL…LDAVKELQVE (64 aa)) is the SAM domain.

As to quaternary structure, interacts with DDX4, PIWIL1, RANBP9 and TDRD1.

Its subcellular location is the cytoplasm. Functionally, plays a central role during spermatogenesis by repressing transposable elements and preventing their mobilization, which is essential for the germline integrity. Acts via the piRNA metabolic process, which mediates the repression of transposable elements during meiosis by forming complexes composed of piRNAs and Piwi proteins and governs the methylation and subsequent repression of transposons. Its association with pi-bodies suggests a participation in the primary piRNAs metabolic process. Required prior to the pachytene stage to facilitate the production of multiple types of piRNAs, including those associated with repeats involved in the regulation of retrotransposons. May act by mediating protein-protein interactions during germ cell maturation. In Notamacropus eugenii (Tammar wallaby), this protein is Ankyrin repeat, SAM and basic leucine zipper domain-containing protein 1 (ASZ1).